A 1115-amino-acid polypeptide reads, in one-letter code: PAN2-PAN3 deadenylation complex catalytic subunit PAN2 (1115 aa).

WD repeat units lie at residues N27 to Y66, A112 to D153, L155 to S194, A197 to R236, and H295 to F334. The linker stretch occupies residues T337–Y473. A USP domain is found at E474 to A855. Residues C660, H662, C713, and C716 each contribute to the Zn(2+) site. Residues V907 to Y1079 form the Exonuclease domain. Residues D910, E912, D1020, and D1071 each contribute to the a divalent metal cation site.

The protein belongs to the peptidase C19 family. PAN2 subfamily. In terms of assembly, forms a heterotrimer with an asymmetric homodimer of the regulatory subunit PAN3 to form the poly(A)-nuclease (PAN) deadenylation complex. The cofactor is a divalent metal cation.

The protein localises to the cytoplasm. The enzyme catalyses Exonucleolytic cleavage of poly(A) to 5'-AMP.. With respect to regulation, positively regulated by the regulatory subunit PAN3. Negatively regulated by PAB1-binding protein PBP1. Inhibited under stress conditions. Inhibition of deadenylation under stress increases mRNA stability, which may be a mechanism to retain the majority of the cytoplasmic pool of mRNAs for later reuse and recovery from stress. Functionally, catalytic subunit of the poly(A)-nuclease (PAN) deadenylation complex, one of two cytoplasmic mRNA deadenylases involved in mRNA turnover. PAN specifically shortens poly(A) tails of RNA and the activity is stimulated by poly(A)-binding protein PAB1. PAN deadenylation is followed by rapid degradation of the shortened mRNA tails by the CCR4-NOT complex. Deadenylated mRNAs are then degraded by two alternative mechanisms, namely exosome-mediated 3'-5' exonucleolytic degradation, or deadenylation-dependent mRNA decaping by DCP1-DCP2 and subsequent 5'-3' exonucleolytic degradation by XRN1. May also be involved in post-transcriptional maturation of mRNA poly(A) tails, trimming the tails from their synthesized length to the slightly shorter, apparently messenger-specific length found on newly exported mRNAs. PAN cooperates with protein kinase DUN1 in the regulation of RAD5 mRNA levels and cell survival in response to replicational stress. This Saccharomyces cerevisiae (strain ATCC 204508 / S288c) (Baker's yeast) protein is PAN2-PAN3 deadenylation complex catalytic subunit PAN2.